The sequence spans 244 residues: Gas vesicle protein F (244 aa).

This sequence belongs to the gas vesicle GvpF/GvpL family. Binds GvpA.

Its subcellular location is the gas vesicle. A minor component of the gas vesicle, may be involved in preventing GvpA aggregation during gas vesicle nucleation. Gas vesicles (GV) are hollow, gas filled proteinaceous nanostructures. During planktonic growth they allow positioning of the organism at a favorable depth for light or nutrient acquisition. Its function is as follows. Cluster expression in E.coli (gvpA1-gvpA2-gvpC-gvpN-gvpJ-gvpK-gvpF-gvpG-gvpV-gvpW) allows cells to float and produces irregularly shaped gas vesicles. In Nostoc sp. (strain PCC 7120 / SAG 25.82 / UTEX 2576), this protein is Gas vesicle protein F.